We begin with the raw amino-acid sequence, 106 residues long: Large ribosomal subunit protein uL24 (106 aa).

The interval 69–106 is disordered; that stretch reads SNLNPVDPKTGKATRVGRKVSSEGTLVRYSKKSGEEIK.

It belongs to the universal ribosomal protein uL24 family. As to quaternary structure, part of the 50S ribosomal subunit.

One of two assembly initiator proteins, it binds directly to the 5'-end of the 23S rRNA, where it nucleates assembly of the 50S subunit. In terms of biological role, one of the proteins that surrounds the polypeptide exit tunnel on the outside of the subunit. This Bacteroides fragilis (strain ATCC 25285 / DSM 2151 / CCUG 4856 / JCM 11019 / LMG 10263 / NCTC 9343 / Onslow / VPI 2553 / EN-2) protein is Large ribosomal subunit protein uL24.